We begin with the raw amino-acid sequence, 1515 residues long: Neurite extension and migration factor (1515 aa).

Basic and acidic residues predominate over residues 381–405; the sequence is DKKKGKEEVHEDKSIETKDEKDNGE. 6 disordered regions span residues 381–415, 505–529, 731–774, 1158–1225, 1372–1422, and 1435–1479; these read DKKKGKEEVHEDKSIETKDEKDNGEKPALNNKPCG, VNERKEWPPGGSKEEDDDEWCPKKR, KKIK…HMSE, FDEP…TKKG, TPQE…EDSR, and TLGN…AGTT. 2 stretches are compositionally biased toward polar residues: residues 746–757 and 763–772; these read SPVSEDTSSKAN and TPGTSNSSHM. Residues 1180 to 1193 are compositionally biased toward low complexity; sequence PGKSGAVSQSSSQK. Over residues 1442-1452 the composition is skewed to basic residues; that stretch reads THKKLYRHKSS. Positions 1455 to 1479 are enriched in basic and acidic residues; it reads GLRDEKYKGKRVEREQAHKDEAGTT.

As to expression, expressed in the brain, particularly during the late embryonic and perinatal stages of development. In the developing brain, it is expressed only in the cortical plate and subplate region but not in the intermediate or ventricular zone.

The protein resides in the nucleus. It localises to the cytoplasm. In terms of biological role, involved in neurite outgrowth by regulating cell-cell adhesion via the N-cadherin signaling pathway. May act by regulating expression of protein-coding genes, such as N-cadherins and integrin beta-1 (ITGB1). This chain is Neurite extension and migration factor, found in Mus musculus (Mouse).